Consider the following 431-residue polypeptide: Gamma-glutamyl phosphate reductase (431 aa).

Belongs to the gamma-glutamyl phosphate reductase family.

Its subcellular location is the cytoplasm. The enzyme catalyses L-glutamate 5-semialdehyde + phosphate + NADP(+) = L-glutamyl 5-phosphate + NADPH + H(+). It participates in amino-acid biosynthesis; L-proline biosynthesis; L-glutamate 5-semialdehyde from L-glutamate: step 2/2. Functionally, catalyzes the NADPH-dependent reduction of L-glutamate 5-phosphate into L-glutamate 5-semialdehyde and phosphate. The product spontaneously undergoes cyclization to form 1-pyrroline-5-carboxylate. The sequence is that of Gamma-glutamyl phosphate reductase from Acaryochloris marina (strain MBIC 11017).